A 292-amino-acid polypeptide reads, in one-letter code: Ribosomal RNA small subunit methyltransferase A (292 aa).

Residues Asn28, Leu30, Gly55, Glu76, Asp101, and Asn126 each contribute to the S-adenosyl-L-methionine site.

Belongs to the class I-like SAM-binding methyltransferase superfamily. rRNA adenine N(6)-methyltransferase family. RsmA subfamily.

It is found in the cytoplasm. The catalysed reaction is adenosine(1518)/adenosine(1519) in 16S rRNA + 4 S-adenosyl-L-methionine = N(6)-dimethyladenosine(1518)/N(6)-dimethyladenosine(1519) in 16S rRNA + 4 S-adenosyl-L-homocysteine + 4 H(+). Its function is as follows. Specifically dimethylates two adjacent adenosines (A1518 and A1519) in the loop of a conserved hairpin near the 3'-end of 16S rRNA in the 30S particle. May play a critical role in biogenesis of 30S subunits. This Bacillus mycoides (strain KBAB4) (Bacillus weihenstephanensis) protein is Ribosomal RNA small subunit methyltransferase A.